Reading from the N-terminus, the 137-residue chain is Large-conductance mechanosensitive channel (137 aa).

2 helical membrane-spanning segments follow: residues 9–29 and 79–99; these read AFAV…GAAF and IQTI…VKAI.

Belongs to the MscL family. Homopentamer.

It localises to the cell inner membrane. Channel that opens in response to stretch forces in the membrane lipid bilayer. May participate in the regulation of osmotic pressure changes within the cell. This Pseudomonas paraeruginosa (strain DSM 24068 / PA7) (Pseudomonas aeruginosa (strain PA7)) protein is Large-conductance mechanosensitive channel.